The sequence spans 432 residues: Chorismate synthase aro-2 (432 aa).

Residues histidine 17, histidine 106, and aspartate 367 contribute to the active site. Residues 406-432 form a disordered region; it reads LKQTINSGKDTVGNGVSENVQESDLAQ. A compositionally biased stretch (polar residues) spans 408–432; the sequence is QTINSGKDTVGNGVSENVQESDLAQ.

The protein belongs to the chorismate synthase family. As to quaternary structure, homotetramer.

It catalyses the reaction 5-O-(1-carboxyvinyl)-3-phosphoshikimate = chorismate + phosphate. The enzyme catalyses FMNH2 + NADP(+) = FMN + NADPH + 2 H(+). Its pathway is metabolic intermediate biosynthesis; chorismate biosynthesis; chorismate from D-erythrose 4-phosphate and phosphoenolpyruvate: step 7/7. Functionally, bifunctional chorismate synthase and flavin reductase that catalyzes the conversion of 5-enolpyruvylshikimate 3-phosphate (EPSP) to form chorismate, which is the last common intermediate in the synthesis of the three aromatic amino acids phenylalanine, tyrosine and tryptophan. Acts also as a flavin reductase (FR) able to generate reduced flavin mononucleotide in the presence of NADPH. The protein is Chorismate synthase aro-2 of Neurospora crassa (strain ATCC 24698 / 74-OR23-1A / CBS 708.71 / DSM 1257 / FGSC 987).